Here is a 365-residue protein sequence, read N- to C-terminus: Glycerol dehydrogenase (365 aa).

NAD(+) contacts are provided by aspartate 37, glycine 94, lysine 95, threonine 116, and serine 119. Position 121 (aspartate 121) interacts with glycerol. Residues serine 125, leucine 127, and tyrosine 131 each coordinate NAD(+). Zn(2+) is bound by residues aspartate 171, histidine 254, and histidine 271. Histidine 254 serves as a coordination point for glycerol.

It belongs to the iron-containing alcohol dehydrogenase family. It depends on Zn(2+) as a cofactor.

It carries out the reaction glycerol + NAD(+) = dihydroxyacetone + NADH + H(+). Its pathway is polyol metabolism; glycerol fermentation; glycerone phosphate from glycerol (oxidative route): step 1/2. Catalyzes the NAD-dependent oxidation of glycerol to dihydroxyacetone (glycerone). Allows microorganisms to utilize glycerol as a source of carbon under anaerobic conditions. In Pseudomonas putida (Arthrobacter siderocapsulatus), this protein is Glycerol dehydrogenase (gldA).